The following is a 240-amino-acid chain: Glutathione S-transferase theta-1 (240 aa).

The 81-residue stretch at 2 to 82 (GLELYLDLLS…YLARKYKVPD (81 aa)) folds into the GST N-terminal domain. Glutathione is bound by residues His40, 53–54 (KV), and 66–67 (ES). Positions 88-226 (DLQACARVDE…AKDSQPADPT (139 aa)) constitute a GST C-terminal domain.

It belongs to the GST superfamily. Theta family. As to quaternary structure, homodimer.

It localises to the cytoplasm. The catalysed reaction is RX + glutathione = an S-substituted glutathione + a halide anion + H(+). Conjugation of reduced glutathione to a wide number of exogenous and endogenous hydrophobic electrophiles. Also binds steroids, bilirubin, carcinogens and numerous organic anions. Has dichloromethane dehalogenase activity. The polypeptide is Glutathione S-transferase theta-1 (GSTT1) (Bos taurus (Bovine)).